A 167-amino-acid polypeptide reads, in one-letter code: Peptidyl-prolyl cis-trans isomerase-like 3 (167 aa).

The region spanning 1–160 (MSVTLHTSHG…EPVRIENVTI (160 aa)) is the PPIase cyclophilin-type domain.

This sequence belongs to the cyclophilin-type PPIase family. PPIL3 subfamily.

The catalysed reaction is [protein]-peptidylproline (omega=180) = [protein]-peptidylproline (omega=0). Functionally, PPIases accelerate the folding of proteins. It catalyzes the cis-trans isomerization of proline imidic peptide bonds in oligopeptides. In Gibberella zeae (strain ATCC MYA-4620 / CBS 123657 / FGSC 9075 / NRRL 31084 / PH-1) (Wheat head blight fungus), this protein is Peptidyl-prolyl cis-trans isomerase-like 3 (CYP10).